The chain runs to 472 residues: Transmembrane protein 8B (472 aa).

A compositionally biased stretch (low complexity) spans 1-10 (MNMPQSLGTQ). The disordered stretch occupies residues 1–24 (MNMPQSLGTQPLPPEPPSLGTPIE). At 1 to 233 (MNMPQSLGTQ…ADALTYGFQL (233 aa)) the chain is on the extracellular side. The N-linked (GlcNAc...) asparagine glycan is linked to Asn100. Positions 182–221 (FLSPCVDDCGPYGQCKLLRTHNYLYAACECKAGWRGWGCT) constitute an EGF-like domain. Cystine bridges form between Cys186-Cys196, Cys190-Cys209, and Cys211-Cys220. The helical transmembrane segment at 234–254 (LSTLLLCLSNLMFLPPVVLAI) threads the bilayer. The Cytoplasmic portion of the chain corresponds to 255–257 (RSR). The helical transmembrane segment at 258-277 (YVLEAAVYTFTMFFSTFYHA) threads the bilayer. The Extracellular segment spans residues 278-292 (CDQPGIVVFCIMDYD). A helical membrane pass occupies residues 293–313 (VLQFCDFLGSLMSVWVTVIAM). At 314-315 (AR) the chain is on the cytoplasmic side. Residues 316 to 336 (LQPVIKQVLYLLGAMLLSMAL) traverse the membrane as a helical segment. Residues 337–342 (QLDRHG) are Extracellular-facing. The chain crosses the membrane as a helical span at residues 343 to 363 (LWNLLGPSLFALGILATAWTV). Topologically, residues 364–379 (RSVRRRHCYPPTWRRW) are cytoplasmic. A helical membrane pass occupies residues 380 to 400 (LFYLCPGSLIAGSAVLLYAFV). The Extracellular portion of the chain corresponds to 401–405 (ETRDN). Residues 406–426 (YFYIHSIWHMLIAGSVGFLLP) form a helical membrane-spanning segment. The Cytoplasmic segment spans residues 427–472 (PRAKTDRRVPSGARARGCGYQLCINEQEELGLVGPGGTTVSSICVS).

This sequence belongs to the TMEM8 family. May interact with EZR. Post-translationally, N-glycosylated.

The protein resides in the cell membrane. The protein localises to the cytoplasm. It localises to the nucleus. Its subcellular location is the mitochondrion. It is found in the endoplasmic reticulum. In terms of biological role, may function as a regulator of the EGFR pathway. Probable tumor suppressor which may function in cell growth, proliferation and adhesion. The chain is Transmembrane protein 8B (Tmem8b) from Mus musculus (Mouse).